We begin with the raw amino-acid sequence, 206 residues long: Orotate phosphoribosyltransferase (206 aa).

5-phospho-alpha-D-ribose 1-diphosphate is bound by residues R97, K98, K101, and 125–133; that span reads NDVIASGRS. R157 provides a ligand contact to orotate.

Belongs to the purine/pyrimidine phosphoribosyltransferase family. PyrE subfamily. Homodimer. Mg(2+) is required as a cofactor.

The enzyme catalyses orotidine 5'-phosphate + diphosphate = orotate + 5-phospho-alpha-D-ribose 1-diphosphate. The protein operates within pyrimidine metabolism; UMP biosynthesis via de novo pathway; UMP from orotate: step 1/2. Its function is as follows. Catalyzes the transfer of a ribosyl phosphate group from 5-phosphoribose 1-diphosphate to orotate, leading to the formation of orotidine monophosphate (OMP). This is Orotate phosphoribosyltransferase from Chlamydia felis (strain Fe/C-56) (Chlamydophila felis).